Consider the following 526-residue polypeptide: Fluoride export protein 1 (526 aa).

Disordered regions lie at residues 1–73 (MMTA…RRAS) and 90–149 (ASNI…KQAG). Topologically, residues 1-159 (MMTAPSDTEG…VVAKRQKVSR (159 aa)) are cytoplasmic. 2 stretches are compositionally biased toward basic and acidic residues: residues 21 to 36 (SPDR…DHNH) and 103 to 123 (PITR…YLRE). Residues 160–180 (LATELYTISYLIFFSLLGTLA) traverse the membrane as a helical segment. Residues 181-194 (RLGLQALTSAYPQS) lie on the Extracellular side of the membrane. The helical transmembrane segment at 195-215 (PIIFPSIWPNFAGCVVMGFLA) threads the bilayer. Residues 216 to 260 (EDRMLFRPDWGQQQPNPKKDDDDDEEAKDIDPAAAKKAHMALKKT) lie on the Cytoplasmic side of the membrane. Positions 223–242 (PDWGQQQPNPKKDDDDDEEA) are disordered. A helical membrane pass occupies residues 261-281 (IPLYVGLATGFCGSFTSFSSF). Residues 282–310 (IRDIYLALSNDLAAHGSSAAPVSRNGGYS) lie on the Extracellular side of the membrane. Residues 311 to 331 (FMALLAVTITTISLSLSGLFA) form a helical membrane-spanning segment. Residues 332-361 (GAHLAIAIATLFTRFDLGLPYTFVSRILDR) lie on the Cytoplasmic side of the membrane. A helical transmembrane segment spans residues 362–382 (LIVLLGFGCWLGAVLLSIWPP). Residues 383 to 398 (DRHSAQPEKERWRGTA) are Extracellular-facing. Residues 399–419 (TFALVFAPLGCLTRFYASAHL) traverse the membrane as a helical segment. The Cytoplasmic segment spans residues 420 to 424 (NGRLP). A helical transmembrane segment spans residues 425–445 (SFPLGTFVVNMLGTAVLGMAW). The Extracellular portion of the chain corresponds to 446–452 (DLNHVPS). The chain crosses the membrane as a helical span at residues 453–473 (LGGVVGCQVLQGVADGFCGCL). Topologically, residues 474–492 (TTVSTWVSELAALRRRHAY) are cytoplasmic. Residues 493-513 (VYGGASVGGGLALMVVVMGSL) form a helical membrane-spanning segment. Residues 514-526 (RWTEGFGEVKCIS) lie on the Extracellular side of the membrane.

It belongs to the fluoride channel Fluc/FEX (TC 1.A.43) family.

The protein localises to the cell membrane. It carries out the reaction fluoride(in) = fluoride(out). Fluoride channel required for the rapid expulsion of cytoplasmic fluoride. This chain is Fluoride export protein 1, found in Neurospora crassa (strain ATCC 24698 / 74-OR23-1A / CBS 708.71 / DSM 1257 / FGSC 987).